We begin with the raw amino-acid sequence, 151 residues long: Regulatory protein RecX (151 aa).

The protein belongs to the RecX family.

It is found in the cytoplasm. In terms of biological role, modulates RecA activity. This Chlorobium phaeobacteroides (strain BS1) protein is Regulatory protein RecX.